Here is a 307-residue protein sequence, read N- to C-terminus: Serine/threonine-protein phosphatase PP2A-3 catalytic subunit (307 aa).

The Mn(2+) site is built by aspartate 55, histidine 57, aspartate 83, and asparagine 115. The active-site Proton donor is histidine 116. The Mn(2+) site is built by histidine 165 and histidine 239.

It belongs to the PPP phosphatase family. PP-2A subfamily. It depends on Mn(2+) as a cofactor.

It localises to the cytoplasm. The enzyme catalyses O-phospho-L-seryl-[protein] + H2O = L-seryl-[protein] + phosphate. It catalyses the reaction O-phospho-L-threonyl-[protein] + H2O = L-threonyl-[protein] + phosphate. The sequence is that of Serine/threonine-protein phosphatase PP2A-3 catalytic subunit (PP2A3) from Oryza sativa subsp. indica (Rice).